We begin with the raw amino-acid sequence, 207 residues long: Holliday junction branch migration complex subunit RuvA (207 aa).

The domain I stretch occupies residues Met-1–Asn-64. The tract at residues Thr-65–Pro-143 is domain II. Residues Ala-144–Thr-158 form a flexible linker region. Residues Ser-159–Ile-207 are domain III.

This sequence belongs to the RuvA family. In terms of assembly, homotetramer. Forms an RuvA(8)-RuvB(12)-Holliday junction (HJ) complex. HJ DNA is sandwiched between 2 RuvA tetramers; dsDNA enters through RuvA and exits via RuvB. An RuvB hexamer assembles on each DNA strand where it exits the tetramer. Each RuvB hexamer is contacted by two RuvA subunits (via domain III) on 2 adjacent RuvB subunits; this complex drives branch migration. In the full resolvosome a probable DNA-RuvA(4)-RuvB(12)-RuvC(2) complex forms which resolves the HJ.

The protein resides in the cytoplasm. Functionally, the RuvA-RuvB-RuvC complex processes Holliday junction (HJ) DNA during genetic recombination and DNA repair, while the RuvA-RuvB complex plays an important role in the rescue of blocked DNA replication forks via replication fork reversal (RFR). RuvA specifically binds to HJ cruciform DNA, conferring on it an open structure. The RuvB hexamer acts as an ATP-dependent pump, pulling dsDNA into and through the RuvAB complex. HJ branch migration allows RuvC to scan DNA until it finds its consensus sequence, where it cleaves and resolves the cruciform DNA. The sequence is that of Holliday junction branch migration complex subunit RuvA from Aliivibrio fischeri (strain MJ11) (Vibrio fischeri).